A 97-amino-acid chain; its full sequence is Mitochondrial import inner membrane translocase subunit Tim8 A (97 aa).

Positions 43–66 match the Twin CX3C motif motif; sequence CWEKCMDKPGPKLDSRAEACFVNC. 2 disulfides stabilise this stretch: Cys-43–Cys-66 and Cys-47–Cys-62. Ser-57, Ser-87, Ser-94, and Ser-96 each carry phosphoserine.

Belongs to the small Tim family. In terms of assembly, heterohexamer; composed of 3 copies of TIMM8A and 3 copies of TIMM13, named soluble 70 kDa complex. Associates with the TIM22 complex, whose core is composed of TIMM22. In terms of tissue distribution, present at high level in liver and brain, and at lower level in muscle and heart. In CNS sections, it is predominantly present in the soma and the dendritic portion of the Purkinje cells of the cerebellum, but not in the glial cells. Scattered expression also is also detected in the brain stem, olfactory bulb, substantia nigra, hippocampus and striatum (at protein level). Ubiquitously expressed.

The protein resides in the mitochondrion inner membrane. Functionally, mitochondrial intermembrane chaperone that participates in the import and insertion of some multi-pass transmembrane proteins into the mitochondrial inner membrane. Also required for the transfer of beta-barrel precursors from the TOM complex to the sorting and assembly machinery (SAM complex) of the outer membrane. Acts as a chaperone-like protein that protects the hydrophobic precursors from aggregation and guide them through the mitochondrial intermembrane space. The TIMM8-TIMM13 complex mediates the import of proteins such as TIMM23, SLC25A12/ARALAR1 and SLC25A13/ARALAR2, while the predominant TIMM9-TIMM10 70 kDa complex mediates the import of much more proteins. This chain is Mitochondrial import inner membrane translocase subunit Tim8 A (Timm8a1), found in Mus musculus (Mouse).